Reading from the N-terminus, the 220-residue chain is MFDIGFSELLLVLVIGLVVLGPERLPVAVRTVSGWIRTLRSLAATVQNELAQELKLQELQDSLKKVEQAGLQNLTPELKASMDELKEAAEALKRSYHVDAGSEAPHTIHNPLVTEPEAIHDGVTPAEPATQVSALAQAPNILEAGTASVADSVVEAAPVTTVKSVVQGEVLVKSTPVQEVGLADVMDKPVTKQQIDTIDSHGTDLSSAGPSRIHQPGGDQ.

Residues 1 to 21 (MFDIGFSELLLVLVIGLVVLG) traverse the membrane as a helical segment. The disordered stretch occupies residues 190–220 (VTKQQIDTIDSHGTDLSSAGPSRIHQPGGDQ).

The protein belongs to the TatB family. In terms of assembly, the Tat system comprises two distinct complexes: a TatABC complex, containing multiple copies of TatA, TatB and TatC subunits, and a separate TatA complex, containing only TatA subunits. Substrates initially bind to the TatABC complex, which probably triggers association of the separate TatA complex to form the active translocon.

The protein resides in the cell inner membrane. Part of the twin-arginine translocation (Tat) system that transports large folded proteins containing a characteristic twin-arginine motif in their signal peptide across membranes. Together with TatC, TatB is part of a receptor directly interacting with Tat signal peptides. TatB may form an oligomeric binding site that transiently accommodates folded Tat precursor proteins before their translocation. The sequence is that of Sec-independent protein translocase protein TatB from Yersinia pseudotuberculosis serotype I (strain IP32953).